The chain runs to 254 residues: Aspartate/glutamate leucyltransferase (254 aa).

This sequence belongs to the R-transferase family. Bpt subfamily.

Its subcellular location is the cytoplasm. It catalyses the reaction N-terminal L-glutamyl-[protein] + L-leucyl-tRNA(Leu) = N-terminal L-leucyl-L-glutamyl-[protein] + tRNA(Leu) + H(+). The catalysed reaction is N-terminal L-aspartyl-[protein] + L-leucyl-tRNA(Leu) = N-terminal L-leucyl-L-aspartyl-[protein] + tRNA(Leu) + H(+). Its function is as follows. Functions in the N-end rule pathway of protein degradation where it conjugates Leu from its aminoacyl-tRNA to the N-termini of proteins containing an N-terminal aspartate or glutamate. The chain is Aspartate/glutamate leucyltransferase from Xylella fastidiosa (strain 9a5c).